A 218-amino-acid polypeptide reads, in one-letter code: UPF0598 protein C8orf82 homolog (218 aa).

Belongs to the UPF0598 family.

The protein is UPF0598 protein C8orf82 homolog of Bos taurus (Bovine).